Reading from the N-terminus, the 436-residue chain is 3-ketoacyl-CoA thiolase (436 aa).

Cysteine 99 acts as the Acyl-thioester intermediate in catalysis. Residues histidine 392 and cysteine 422 each act as proton acceptor in the active site.

Belongs to the thiolase-like superfamily. Thiolase family. As to quaternary structure, heterotetramer of two alpha chains (FadJ) and two beta chains (FadI).

Its subcellular location is the cytoplasm. The catalysed reaction is an acyl-CoA + acetyl-CoA = a 3-oxoacyl-CoA + CoA. It functions in the pathway lipid metabolism; fatty acid beta-oxidation. In terms of biological role, catalyzes the final step of fatty acid oxidation in which acetyl-CoA is released and the CoA ester of a fatty acid two carbons shorter is formed. The protein is 3-ketoacyl-CoA thiolase of Salmonella typhi.